The primary structure comprises 249 residues: (2S)-[(R)-hydroxy(phenyl)methyl]succinyl-CoA dehydrogenase subunit BbsC (249 aa).

Belongs to the short-chain dehydrogenases/reductases (SDR) family. As to quaternary structure, heterotetramer composed of 2 inactive BbsC subunits and 2 active BbsD subunits.

The protein operates within xenobiotic degradation; toluene degradation. In terms of biological role, involved in an anaerobic toluene degradation pathway. Catalytically inactive subunit, which is probably required for the structural and/or regulatory integrity of the catalytic subunit BbsD. This subunit cannot bind NAD(+) or substrate. The polypeptide is (2S)-[(R)-hydroxy(phenyl)methyl]succinyl-CoA dehydrogenase subunit BbsC (Thauera aromatica).